A 427-amino-acid chain; its full sequence is Enolase (427 aa).

A (2R)-2-phosphoglycerate-binding site is contributed by glutamine 163. Glutamate 205 functions as the Proton donor in the catalytic mechanism. 3 residues coordinate Mg(2+): aspartate 242, glutamate 285, and aspartate 312. (2R)-2-phosphoglycerate-binding residues include lysine 337, arginine 366, serine 367, and lysine 388. The active-site Proton acceptor is the lysine 337.

Belongs to the enolase family. The cofactor is Mg(2+).

The protein localises to the cytoplasm. It localises to the secreted. It is found in the cell surface. It carries out the reaction (2R)-2-phosphoglycerate = phosphoenolpyruvate + H2O. It functions in the pathway carbohydrate degradation; glycolysis; pyruvate from D-glyceraldehyde 3-phosphate: step 4/5. In terms of biological role, catalyzes the reversible conversion of 2-phosphoglycerate (2-PG) into phosphoenolpyruvate (PEP). It is essential for the degradation of carbohydrates via glycolysis. The polypeptide is Enolase (Albidiferax ferrireducens (strain ATCC BAA-621 / DSM 15236 / T118) (Rhodoferax ferrireducens)).